The chain runs to 53 residues: Kunitz-type trypsin inhibitor alpha chain (53 aa).

Residues 33–53 are disordered; that stretch reads GWGLPRRTGDESCPLNVKAVR.

The protein belongs to the protease inhibitor I3 (leguminous Kunitz-type inhibitor) family. In terms of assembly, heterodimer of an alpha and a beta chain linked by a disulfide bond.

Inhibits trypsin with a Ki of 0.25 uM. Inhibits the trypsin-like proteases in midguts of larval H.armigera, S.exigua, and P.rapae. In Albizia kalkora (Kalkora mimosa), this protein is Kunitz-type trypsin inhibitor alpha chain.